We begin with the raw amino-acid sequence, 473 residues long: ATP synthase subunit beta (473 aa).

Position 158 to 165 (158 to 165) interacts with ATP; the sequence is GGAGVGKT.

Belongs to the ATPase alpha/beta chains family. As to quaternary structure, F-type ATPases have 2 components, CF(1) - the catalytic core - and CF(0) - the membrane proton channel. CF(1) has five subunits: alpha(3), beta(3), gamma(1), delta(1), epsilon(1). CF(0) has three main subunits: a(1), b(2) and c(9-12). The alpha and beta chains form an alternating ring which encloses part of the gamma chain. CF(1) is attached to CF(0) by a central stalk formed by the gamma and epsilon chains, while a peripheral stalk is formed by the delta and b chains.

It localises to the cell membrane. It carries out the reaction ATP + H2O + 4 H(+)(in) = ADP + phosphate + 5 H(+)(out). Functionally, produces ATP from ADP in the presence of a proton gradient across the membrane. The catalytic sites are hosted primarily by the beta subunits. This is ATP synthase subunit beta from Geobacillus stearothermophilus (Bacillus stearothermophilus).